Consider the following 318-residue polypeptide: Acetyl-coenzyme A carboxylase carboxyl transferase subunit beta (318 aa).

A CoA carboxyltransferase N-terminal domain is found at 25–294 (LWSKCSECGT…AVKGELPAPA (270 aa)). The Zn(2+) site is built by Cys29, Cys32, Cys48, and Cys51. The C4-type zinc-finger motif lies at 29–51 (CSECGTMLFHRELSDNLNVCTNC). The segment at 286 to 318 (VKGELPAPAPLESDAETALASDTDPNGAPPSKD) is disordered.

This sequence belongs to the AccD/PCCB family. Acetyl-CoA carboxylase is a heterohexamer composed of biotin carboxyl carrier protein (AccB), biotin carboxylase (AccC) and two subunits each of ACCase subunit alpha (AccA) and ACCase subunit beta (AccD). Zn(2+) serves as cofactor.

It is found in the cytoplasm. The catalysed reaction is N(6)-carboxybiotinyl-L-lysyl-[protein] + acetyl-CoA = N(6)-biotinyl-L-lysyl-[protein] + malonyl-CoA. The protein operates within lipid metabolism; malonyl-CoA biosynthesis; malonyl-CoA from acetyl-CoA: step 1/1. Functionally, component of the acetyl coenzyme A carboxylase (ACC) complex. Biotin carboxylase (BC) catalyzes the carboxylation of biotin on its carrier protein (BCCP) and then the CO(2) group is transferred by the transcarboxylase to acetyl-CoA to form malonyl-CoA. The protein is Acetyl-coenzyme A carboxylase carboxyl transferase subunit beta of Jannaschia sp. (strain CCS1).